Consider the following 399-residue polypeptide: F-box protein At1g10110 (399 aa).

An F-box domain is found at 9 to 56 (PNWSELVTDILSLVFKHLSFTDFARAKTVCSSWYFASKSSSPRKNHTP).

The sequence is that of F-box protein At1g10110 from Arabidopsis thaliana (Mouse-ear cress).